Reading from the N-terminus, the 337-residue chain is MLTLPFDESVVMPESQMCRKFARQCEDQKQIKKPESFPKQVVLRGKSIKRAPGEETEKEEEEEDREEEDENGLSRRRGLRKKKTTKLRLERVKFRRQEANARERNRMHGLNDALDNLRKVVPCYSKTQKLSKIETLRLAKNYIWALSEILRIGKRPDLLTFVQNLCKGLSQPTTNLVAGCLQLNARSFLMGQGGEAAHHTRSPYSTFYPPYHSPELATPPGHGTLDNSKSMKPYNYCSAYESFYESTSPECASPQFEGPLSPPPINYNGIFSLKQEETLDYGKNYNYGMHYCAVPPRGPLGQGAMFRLPTDSHFPYDLHLRSQSLTMQDELNAVFHN.

Residues 28–80 (QKQIKKPESFPKQVVLRGKSIKRAPGEETEKEEEEEDREEEDENGLSRRRGLR) are disordered. Residues 54–71 (EETEKEEEEEDREEEDEN) show a composition bias toward acidic residues. A Nuclear localization signal motif is present at residues 80 to 86 (RKKKTTK). In terms of domain architecture, bHLH spans 94–146 (FRRQEANARERNRMHGLNDALDNLRKVVPCYSKTQKLSKIETLRLAKNYIWAL).

In terms of assembly, efficient DNA binding requires dimerization with another bHLH protein. Specific to the nervous system of both embryos and adults. Highest levels in the cortical plate of the cerebrum.

The protein localises to the nucleus. Functionally, activates E box-dependent transcription in collaboration with TCF3/E47. May be a trans-acting factor involved in the development and maintenance of the mammalian nervous system. Transactivates the promoter of its own gene. The protein is Neurogenic differentiation factor 6 (Neurod6) of Mus musculus (Mouse).